A 356-amino-acid polypeptide reads, in one-letter code: Alanine racemase (356 aa).

The active-site Proton acceptor; specific for D-alanine is the Lys-35. Position 35 is an N6-(pyridoxal phosphate)lysine (Lys-35). Arg-130 lines the substrate pocket. Tyr-253 functions as the Proton acceptor; specific for L-alanine in the catalytic mechanism. Met-301 contributes to the substrate binding site.

It belongs to the alanine racemase family. Pyridoxal 5'-phosphate serves as cofactor.

It carries out the reaction L-alanine = D-alanine. It participates in amino-acid biosynthesis; D-alanine biosynthesis; D-alanine from L-alanine: step 1/1. Its function is as follows. Catalyzes the interconversion of L-alanine and D-alanine. May also act on other amino acids. This chain is Alanine racemase (alr), found in Paraburkholderia phytofirmans (strain DSM 17436 / LMG 22146 / PsJN) (Burkholderia phytofirmans).